The following is a 185-amino-acid chain: UPF0301 protein PSHAa2600 (185 aa).

It belongs to the UPF0301 (AlgH) family.

The chain is UPF0301 protein PSHAa2600 from Pseudoalteromonas translucida (strain TAC 125).